The chain runs to 146 residues: Large ribosomal subunit protein uL15 (146 aa).

A compositionally biased stretch (basic and acidic residues) spans 1-13 (MKLHELKPAEGSR). Residues 1 to 51 (MKLHELKPAEGSRKVRNRVGRGTSSGNGKTSGRGQKGQKARSGGGVRLGFE) form a disordered region. 2 stretches are compositionally biased toward gly residues: residues 23 to 35 (TSSGNGKTSGRGQ) and 42 to 51 (SGGGVRLGFE).

The protein belongs to the universal ribosomal protein uL15 family. As to quaternary structure, part of the 50S ribosomal subunit.

Functionally, binds to the 23S rRNA. The chain is Large ribosomal subunit protein uL15 from Streptococcus pneumoniae serotype 2 (strain D39 / NCTC 7466).